The chain runs to 68 residues: MVQRKSQDGKTVMVEQIGSPIRNSRIQHATLKGLGLNKMRRRRILKDTLCVRGMIAKVRHLVRVIDEG.

This sequence belongs to the universal ribosomal protein uL30 family. In terms of assembly, part of the 50S ribosomal subunit.

The polypeptide is Large ribosomal subunit protein uL30 (Bartonella quintana (strain Toulouse) (Rochalimaea quintana)).